We begin with the raw amino-acid sequence, 114 residues long: Large ribosomal subunit protein uL18 (114 aa).

The protein belongs to the universal ribosomal protein uL18 family. Part of the 50S ribosomal subunit; part of the 5S rRNA/L5/L18/L25 subcomplex. Contacts the 23S rRNA. Contacts protein L27 and the 5S rRNA.

This is one of the proteins that bind and probably mediate the attachment of the 5S RNA into the large ribosomal subunit, where it forms part of the central protuberance. In Deinococcus radiodurans (strain ATCC 13939 / DSM 20539 / JCM 16871 / CCUG 27074 / LMG 4051 / NBRC 15346 / NCIMB 9279 / VKM B-1422 / R1), this protein is Large ribosomal subunit protein uL18 (rplR).